The chain runs to 368 residues: F-box/kelch-repeat protein At2g44700 (368 aa).

The interval 1–23 (MSSSNEPPRKTDQPSSSSASASA) is disordered. Low complexity predominate over residues 14 to 23 (PSSSSASASA). In terms of domain architecture, F-box spans 25–71 (PSLFLSLPLEIISMILARVPKRYYPILCSVSKNMRSLVRSPEIHKAR). Residues 177-221 (KVYVIGGYQDDEIAAESFDLNTQTWEAAPIPDEKESHRWICKANV) form a Kelch repeat.

This chain is F-box/kelch-repeat protein At2g44700, found in Arabidopsis thaliana (Mouse-ear cress).